The following is a 258-amino-acid chain: Myogenic factor 5 (258 aa).

Residues 21–50 (LSSPEGEFPEDFEPRELPPFGAPAPTEPAC) are disordered. In terms of domain architecture, bHLH spans 85–136 (DRRKAATMRERRRLKKVNQAFETLKRCTTANPNQRLPKVEILRNAIRYIESL). A disordered region spans residues 220 to 258 (AEEPGLPLRHAGSLSPGASIDSGPGTPGSPPPRRTYQAL).

As to quaternary structure, efficient DNA binding requires dimerization with another bHLH protein.

It is found in the nucleus. Functionally, acts as a transcriptional activator that promotes transcription of muscle-specific target genes and plays a role in muscle differentiation. Induces fibroblasts to differentiate into myoblasts. Probable sequence specific DNA-binding protein. The protein is Myogenic factor 5 (MYF5) of Gallus gallus (Chicken).